A 301-amino-acid polypeptide reads, in one-letter code: Retinochrome (301 aa).

The Extracellular segment spans residues 1–17 (MFGNPAMTGLHQFTMWE). The helical transmembrane segment at 18-43 (HYFTGSIYLVLGCVVFSLCGMCIIFL) threads the bilayer. The Cytoplasmic portion of the chain corresponds to 44-54 (ARQSPKPRRKY). Residues 55–76 (AILIHVLITAMAVNGGDPAHAS) traverse the membrane as a helical segment. The Extracellular portion of the chain corresponds to 77 to 94 (SSIVGRWLYGSVGCQLMG). A helical transmembrane segment spans residues 95 to 120 (FWGFFGGMSHIWMLFAFAMERYMAVC). Residues 121 to 132 (HREFYQQMPSVY) lie on the Cytoplasmic side of the membrane. Residues 133–153 (YSIIVGLMYTFGTFWATMPLL) traverse the membrane as a helical segment. Topologically, residues 154–180 (GWASYGLEVHGTSCTINYSVSDESYQS) are extracellular. The N-linked (GlcNAc...) asparagine glycan is linked to N170. The chain crosses the membrane as a helical span at residues 181–208 (YVFFLAIFSFIFPMVSGWYAISKAWSGL). Residues 209 to 230 (SAIPDAEKEKDKDILSEEQLTA) are Cytoplasmic-facing. A helical transmembrane segment spans residues 231 to 255 (LAGAFILISLISWSGFGYVAIYSAL). Residues 256-264 (THGGAQLSH) are Extracellular-facing. The chain crosses the membrane as a helical span at residues 265–289 (LRGHVPPIMSKTGCALFPLLIFLLT). Residue K275 is modified to N6-(retinylidene)lysine. Over 290 to 301 (ARSLPKSDTKKP) the chain is Cytoplasmic.

The protein belongs to the G-protein coupled receptor 1 family. Opsin subfamily. As to expression, mainly stored in myeloid bodies of the inner segments.

It is found in the membrane. In terms of biological role, retinochrome is capable of acting as an effective catalyst in the light to convert various isomers of retinal into 11-cis, the form that is required by opsin to resynthesize rhodopsin. This chain is Retinochrome, found in Todarodes pacificus (Japanese flying squid).